We begin with the raw amino-acid sequence, 328 residues long: MARTLMKPDDVKGAWAIIPTPAKDDASDWRATKTVDLDETARVVNGLIDAGINGILSMGTLGEAATMTHDEKLDFIKALVDAAAGRVPIFVGTTCLNTRDTIALTRQALDIGADGTMLGVPMWCAPSVDVAVQFYKDLAEAVPEMNIAIYANPEAFKFDFPRSFWAQVAEIPQVVTAKYIGVAHLLPDLAAIRGRIKLLPIDFDYYGAARMDESIDAFWSSGAVCDPLVTTTLRDLVSQARATGDWSAARAFMGRLGPTAAPLFPNGSFKEFSTYNIALEKARMNAGGWMNAGPVRPPYHLCPEPYLEGARLSGRMWAELGKALAAEK.

This sequence belongs to the DapA family. In terms of assembly, homotrimer.

It carries out the reaction (3E)-4-(2-hydroxyphenyl)-2-oxobut-3-enoate + H2O = salicylaldehyde + pyruvate. Its pathway is aromatic compound metabolism; naphthalene degradation. With respect to regulation, inhibited bye p-chloromercuribenzoate and salicylaldehyde. Activated by salicylate. Involved in the naphthalene and naphthalenesulfonate catabolic pathway. Catalyzes the transformation of trans-O-hydroxybenzylidenepyruvate (THBPA) to salicylaldehyde and pyruvate. The reaction is reversible. Can also use 2,4-dihydroxybenzalpyruvate (2,4-DHBP) and 2,6-dihydroxybenzalpyruvate (2,6-DHBP). The chain is Trans-O-hydroxybenzylidenepyruvate hydratase-aldolase (nsaE) from Sphingobium xenophagum.